Reading from the N-terminus, the 143-residue chain is MEALVLLGHGSRLPYSKEIVGKVAEKIKEKNIYDIVEIGMMEFNEPTIPQTINKVIAEGAKKIIIVPVFLAHGNHTKRDIPQILGLIECEEHHHEGEGGHHHHHHHHHGEKIEVPEGVEIIYRDPMGADDRVVDIVLDRAKGN.

The active-site Proton acceptor is His-9. His-9 provides a ligand contact to Co(2+). Residue His-9 participates in Ni(2+) binding. Substrate is bound by residues Glu-45 and 70 to 75; that span reads LAHGNH. Residue His-75 participates in Co(2+) binding. His-75 is a binding site for Ni(2+).

The protein belongs to the CbiX family. CbiXS subfamily. As to quaternary structure, homotetramer; dimer of dimers.

The enzyme catalyses Co-sirohydrochlorin + 2 H(+) = sirohydrochlorin + Co(2+). It carries out the reaction Ni-sirohydrochlorin + 2 H(+) = sirohydrochlorin + Ni(2+). It functions in the pathway cofactor biosynthesis; adenosylcobalamin biosynthesis; cob(II)yrinate a,c-diamide from sirohydrochlorin (anaerobic route): step 1/10. Functionally, catalyzes the insertion of Co(2+) into sirohydrochlorin as part of the anaerobic pathway to cobalamin biosynthesis. Involved in the biosynthesis of the unique nickel-containing tetrapyrrole coenzyme F430, the prosthetic group of methyl-coenzyme M reductase (MCR), which plays a key role in methanogenesis and anaerobic methane oxidation. Catalyzes the insertion of Ni(2+) into sirohydrochlorin to yield Ni-sirohydrochlorin. In Methanococcus aeolicus (strain ATCC BAA-1280 / DSM 17508 / OCM 812 / Nankai-3), this protein is Sirohydrochlorin cobaltochelatase.